A 388-amino-acid chain; its full sequence is Succinate--CoA ligase [ADP-forming] subunit beta (388 aa).

In terms of domain architecture, ATP-grasp spans 9–244 (KQLFARYGLP…QSQEDPREAQ (236 aa)). Residues K46, 53–55 (GRG), E99, T102, and E107 each bind ATP. Mg(2+) is bound by residues N199 and D213. Substrate is bound by residues N264 and 321 to 323 (GIV).

This sequence belongs to the succinate/malate CoA ligase beta subunit family. Heterotetramer of two alpha and two beta subunits. Requires Mg(2+) as cofactor.

The catalysed reaction is succinate + ATP + CoA = succinyl-CoA + ADP + phosphate. It catalyses the reaction GTP + succinate + CoA = succinyl-CoA + GDP + phosphate. The protein operates within carbohydrate metabolism; tricarboxylic acid cycle; succinate from succinyl-CoA (ligase route): step 1/1. In terms of biological role, succinyl-CoA synthetase functions in the citric acid cycle (TCA), coupling the hydrolysis of succinyl-CoA to the synthesis of either ATP or GTP and thus represents the only step of substrate-level phosphorylation in the TCA. The beta subunit provides nucleotide specificity of the enzyme and binds the substrate succinate, while the binding sites for coenzyme A and phosphate are found in the alpha subunit. This Escherichia coli O139:H28 (strain E24377A / ETEC) protein is Succinate--CoA ligase [ADP-forming] subunit beta.